The sequence spans 316 residues: GPI-specific phospholipase A2-like PGAP3 (316 aa).

The first 18 residues, 1–18, serve as a signal peptide directing secretion; sequence MAPFLVLFLAGVVAASRG. Over 19–93 the chain is Lumenal; it reads DREPVYRDCV…QFHGKWPFSR (75 aa). N-linked (GlcNAc...) asparagine glycosylation occurs at N35. The chain crosses the membrane as a helical span at residues 94–114; sequence FLFFQEPASALASFLNGVASL. Topologically, residues 115-132 are cytoplasmic; sequence LMLLRYRSSVPSSCQMYR. A helical transmembrane segment spans residues 133-153; sequence TCLAFSMVSVNAWFWSTIFHT. Topologically, residues 154–163 are lumenal; it reads RDTALTEKMD. Residues 164–180 form a helical membrane-spanning segment; it reads YFCASSVILHSIYLCCM. Over 181-182 the chain is Cytoplasmic; sequence RT. The chain crosses the membrane as a helical span at residues 183 to 203; that stretch reads FGLQYPSIANGFGAFLVLLFA. The Lumenal segment spans residues 204–218; sequence CHVSYLTLGRFDYSY. Residues 219 to 239 form a helical membrane-spanning segment; sequence NMAANTGFGVLNLMWWLAWCF. Residues 240 to 251 are Cytoplasmic-facing; that stretch reads RRRFHQPYLWKC. A helical transmembrane segment spans residues 252-272; sequence VLVVISLQSLALLELLDFPPV. M273 is a topological domain (lumenal). The chain crosses the membrane as a helical span at residues 274-293; the sequence is WILDAHALWHFSTVPLHFLF. Residues 294 to 316 are Cytoplasmic-facing; it reads YSFLKDDSLYLLKINHDDIPKLD.

This sequence belongs to the PGAP3 family.

It is found in the golgi apparatus membrane. In terms of biological role, involved in the fatty acid remodeling steps of GPI-anchor maturation where the unsaturated acyl chain at sn-2 of inositol phosphate is replaced by a saturated stearoyl chain. May catalyze the first step of the fatty acid remodeling, by removing the unsaturated acyl chain at sn-2 of inositol phosphate, generating a lyso-GPI intermediate. The fatty acid remodeling steps is critical for the integration of GPI-APs into lipid rafts. The chain is GPI-specific phospholipase A2-like PGAP3 from Xenopus tropicalis (Western clawed frog).